The following is a 197-amino-acid chain: UPF0301 protein A2cp1_4106 (197 aa).

It belongs to the UPF0301 (AlgH) family.

In Anaeromyxobacter dehalogenans (strain 2CP-1 / ATCC BAA-258), this protein is UPF0301 protein A2cp1_4106.